Reading from the N-terminus, the 821-residue chain is DNA ligase (821 aa).

NAD(+)-binding positions include 33 to 37, 82 to 83, and E113; these read DVDYD and SL. The N6-AMP-lysine intermediate role is filled by K115. NAD(+) contacts are provided by R136, E173, K290, and K314. Zn(2+) is bound by residues C408, C411, C426, and C432. Residues 741 to 821 enclose the BRCT domain; the sequence is IVAGPLDGQT…RLLAYLAEHE (81 aa).

Belongs to the NAD-dependent DNA ligase family. LigA subfamily. Requires Mg(2+) as cofactor. It depends on Mn(2+) as a cofactor.

The enzyme catalyses NAD(+) + (deoxyribonucleotide)n-3'-hydroxyl + 5'-phospho-(deoxyribonucleotide)m = (deoxyribonucleotide)n+m + AMP + beta-nicotinamide D-nucleotide.. In terms of biological role, DNA ligase that catalyzes the formation of phosphodiester linkages between 5'-phosphoryl and 3'-hydroxyl groups in double-stranded DNA using NAD as a coenzyme and as the energy source for the reaction. It is essential for DNA replication and repair of damaged DNA. In Stenotrophomonas maltophilia (strain K279a), this protein is DNA ligase.